Here is a 164-residue protein sequence, read N- to C-terminus: General odorant-binding protein 1 (164 aa).

Positions 1-19 are cleaved as a signal peptide; that stretch reads MPGVLRALLLLAAAAPLLA. 3 cysteine pairs are disulfide-bonded: Cys-38-Cys-73, Cys-69-Cys-127, and Cys-116-Cys-136.

This sequence belongs to the PBP/GOBP family. As to expression, antenna.

Functionally, present in the aqueous fluid surrounding olfactory sensory dendrites and are thought to aid in the capture and transport of hydrophobic odorants into and through this fluid. This Heliothis virescens (Tobacco budworm moth) protein is General odorant-binding protein 1.